A 142-amino-acid chain; its full sequence is Hemoglobin subunit pi (142 aa).

In terms of domain architecture, Globin spans 2 to 142 (TLTQAEKAAV…VSSVLTEKYR (141 aa)). Heme b-binding residues include His-59 and His-88.

It belongs to the globin family.

The pi' chain is the counterpart of the alpha chain in the major early embryonic hemoglobin P. In Cairina moschata (Muscovy duck), this protein is Hemoglobin subunit pi.